Here is a 58-residue protein sequence, read N- to C-terminus: MATIKVTQTKSSIGRLPKHKATLRGLGLRKINHTVELEDTPCVRGMINKVYYMVKVEE.

Belongs to the universal ribosomal protein uL30 family. As to quaternary structure, part of the 50S ribosomal subunit.

The protein is Large ribosomal subunit protein uL30 of Vibrio campbellii (strain ATCC BAA-1116).